A 134-amino-acid chain; its full sequence is MSWQTYVDDHLMCDIEGHEGHRLTAAAIVGHDGSVWAQSATFPQFKPEEMNGIMTDFNEPGHLAPTGLHLGGTKYMVIQGEAGAVTRGKKGTGGITIKKTGQALVFGIYEEPVTPGQCNMVVGRLGDYLLEQGL.

The cysteines at positions 13 and 118 are disulfide-linked. Residues Ala-84–Thr-100 carry the Involved in PIP2 interaction motif. Phosphothreonine is present on Thr-114.

Belongs to the profilin family. Occurs in many kinds of cells as a complex with monomeric actin in a 1:1 ratio. Phosphorylated by MAP kinases.

It is found in the cytoplasm. The protein localises to the cytoskeleton. Binds to actin and affects the structure of the cytoskeleton. At high concentrations, profilin prevents the polymerization of actin, whereas it enhances it at low concentrations. The protein is Profilin-2 of Olea europaea (Common olive).